The primary structure comprises 310 residues: N-acetylmuramic acid 6-phosphate etherase (310 aa).

An SIS domain is found at 64 to 227 (ITSRLKSNGR…STSVMIKLGK (164 aa)). The active-site Proton donor is glutamate 92. Glutamate 123 is a catalytic residue.

It belongs to the GCKR-like family. MurNAc-6-P etherase subfamily. In terms of assembly, homodimer.

The catalysed reaction is N-acetyl-D-muramate 6-phosphate + H2O = N-acetyl-D-glucosamine 6-phosphate + (R)-lactate. It participates in amino-sugar metabolism; N-acetylmuramate degradation. Its function is as follows. Specifically catalyzes the cleavage of the D-lactyl ether substituent of MurNAc 6-phosphate, producing GlcNAc 6-phosphate and D-lactate. The protein is N-acetylmuramic acid 6-phosphate etherase of Prochlorococcus marinus (strain NATL2A).